The primary structure comprises 318 residues: Ribokinase (318 aa).

Substrate-binding positions include 11 to 13 (NTD), 41 to 45 (GKGAN), and Glu-146. ATP contacts are provided by residues Asn-190 and 229–234 (TLGSQG). K(+)-binding residues include Asp-256 and Thr-258. 261–262 (GD) contributes to the ATP binding site. Asp-262 contributes to the substrate binding site. Asp-262 (proton acceptor) is an active-site residue. Positions 292, 295, 297, and 301 each coordinate K(+).

Belongs to the carbohydrate kinase PfkB family. Ribokinase subfamily. Homodimer. Mg(2+) is required as a cofactor.

The protein resides in the cytoplasm. It is found in the nucleus. The enzyme catalyses D-ribose + ATP = D-ribose 5-phosphate + ADP + H(+). Its pathway is carbohydrate metabolism; D-ribose degradation; D-ribose 5-phosphate from beta-D-ribopyranose: step 2/2. With respect to regulation, activated by a monovalent cation that binds near, but not in, the active site. The most likely occupant of the site in vivo is potassium. Ion binding induces a conformational change that may alter substrate affinity. Functionally, catalyzes the phosphorylation of ribose at O-5 in a reaction requiring ATP and magnesium. The resulting D-ribose-5-phosphate can then be used either for sythesis of nucleotides, histidine, and tryptophan, or as a component of the pentose phosphate pathway. The chain is Ribokinase from Schizosaccharomyces pombe (strain 972 / ATCC 24843) (Fission yeast).